The chain runs to 1722 residues: Lymphocyte antigen 75 (1722 aa).

The signal sequence occupies residues 1-27 (MGTRRVTPGCAAGLLVLLLRCFGLAEP). Topologically, residues 28–1666 (SEFSGDDSFT…VVCKVPLSPD (1639 aa)) are extracellular. Residues 32 to 182 (GDDSFTIVNE…FLVGETWHHD (151 aa)) form the Ricin B-type lectin domain. The N-linked (GlcNAc...) asparagine glycan is linked to Asn135. The region spanning 164-211 (SYGRPCEFPFLVGETWHHDCIRDENHSGPWCATTLNYEYDQKWGICLK) is the Fibronectin type-II domain. Intrachain disulfides connect Cys169–Cys194, Cys183–Cys209, Cys247–Cys340, and Cys317–Cys332. Residues 225–341 (QIGSCYQFNN…CEAQQPYVCK (117 aa)) enclose the C-type lectin 1 domain. 2 N-linked (GlcNAc...) asparagine glycosylation sites follow: Asn345 and Asn377. C-type lectin domains are found at residues 368-486 (QNGF…YVCK), 493-625 (NDTR…ICKK), and 652-791 (SNLS…WVCQ). 2 disulfide bridges follow: Cys389/Cys485 and Cys462/Cys477. Asn529 is a glycosylation site (N-linked (GlcNAc...) asparagine). 3 disulfides stabilise this stretch: Cys597/Cys614, Cys678/Cys790, and Cys752/Cys782. 2 N-linked (GlcNAc...) asparagine glycosylation sites follow: Asn843 and Asn865. Tyr933 is modified (phosphotyrosine). Asn934 and Asn1076 each carry an N-linked (GlcNAc...) asparagine glycan. C-type lectin domains are found at residues 958–1091 (FQNK…LCQK) and 1110–1222 (YLNN…ICYY). 2 disulfides stabilise this stretch: Cys1060–Cys1080 and Cys1197–Cys1211. N-linked (GlcNAc...) asparagine glycans are attached at residues Asn1225, Asn1320, and Asn1392. A C-type lectin 7 domain is found at 1251-1374 (FQNSCYNFMI…VIDETLHFYQ (124 aa)). 2 C-type lectin domains span residues 1401 to 1513 (YEDG…ICYK) and 1542 to 1661 (YGDH…VCKV). An intrachain disulfide couples Cys1488 to Cys1502. N-linked (GlcNAc...) asparagine glycosylation is found at Asn1593 and Asn1626. An intrachain disulfide couples Cys1635 to Cys1650. Residues 1667–1691 (YRGIAVLFAVLSVLALISGLIWFLV) form a helical membrane-spanning segment. Residues 1692–1722 (QRNHFRWTGLSSVRYEHGANEDEVMLPSFHD) lie on the Cytoplasmic side of the membrane. Phosphoserine occurs at positions 1703 and 1719.

As to expression, expressed in the thymus and cultured bone marrow cells.

The protein resides in the membrane. In terms of biological role, acts as an endocytic receptor to direct captured antigens from the extracellular space to a specialized antigen-processing compartment. Causes reduced proliferation of B lymphocytes. This chain is Lymphocyte antigen 75 (LY75), found in Mesocricetus auratus (Golden hamster).